A 152-amino-acid polypeptide reads, in one-letter code: Transcriptional repressor NrdR (152 aa).

A zinc finger lies at 3–34 (CCYCGHGESKVLETRSAEEGRVIRRRRECMEC). The 91-residue stretch at 49–139 (LIVRKKGGSL…VYRQFTDVGR (91 aa)) folds into the ATP-cone domain.

It belongs to the NrdR family. Requires Zn(2+) as cofactor.

Functionally, negatively regulates transcription of bacterial ribonucleotide reductase nrd genes and operons by binding to NrdR-boxes. In Heliobacterium modesticaldum (strain ATCC 51547 / Ice1), this protein is Transcriptional repressor NrdR.